Reading from the N-terminus, the 425-residue chain is 2-(3-amino-3-carboxypropyl)histidine synthase subunit 1 (425 aa).

Residues 1–29 (MSGSTESKKQPRRRFIGRKSGNSNNDKLT) are disordered. Residues 1-60 (MSGSTESKKQPRRRFIGRKSGNSNNDKLTTVAENGNEIIHKQKSRIALGRSVNHVPEDIL) are required for function but dispensable for interaction with DPH2 and DPH3. The segment covering 20-29 (SGNSNNDKLT) has biased composition (polar residues). Residue Ser-44 is modified to Phosphoserine. The [4Fe-4S] cluster site is built by Cys-133, Cys-239, and Cys-368. The required for function but dispensable for interaction with DPH2 and DPH3 stretch occupies residues 366-425 (VACPRLSIDWGYAFNKPLLTPYEASVLLKKDVMFSEKYYPMDYYEAKGYGRGETPKHAIE).

It belongs to the DPH1/DPH2 family. DPH1 subfamily. In terms of assembly, component of the 2-(3-amino-3-carboxypropyl)histidine synthase complex composed of DPH1, DPH2, KTI11/DPH3 and a NADH-dependent reductase, predominantly CBR1. Interacts with DPH2; the interaction is direct. Interacts with KTI11/DPH3. [4Fe-4S] cluster is required as a cofactor.

The protein resides in the cytoplasm. The enzyme catalyses L-histidyl-[translation elongation factor 2] + S-adenosyl-L-methionine = 2-[(3S)-amino-3-carboxypropyl]-L-histidyl-[translation elongation factor 2] + S-methyl-5'-thioadenosine + H(+). The protein operates within protein modification; peptidyl-diphthamide biosynthesis. Catalyzes the first step of diphthamide biosynthesis, a post-translational modification of histidine which occurs in elongation factor 2. In association with DPH2, transfers a 3-amino-3-carboxypropyl (ACP) group from S-adenosyl-L-methionine (SAM) to a histidine residue, the reaction is assisted by a reduction system comprising KTI11/DPH3 and a NADH-dependent reductase, predominantly CBR1. This Saccharomyces cerevisiae (strain ATCC 204508 / S288c) (Baker's yeast) protein is 2-(3-amino-3-carboxypropyl)histidine synthase subunit 1 (DPH1).